The following is a 353-amino-acid chain: UPF0283 membrane protein YcjF (353 aa).

3 consecutive transmembrane segments (helical) span residues 70 to 90 (MVMG…VQWT), 100 to 120 (VALG…GSVV), and 213 to 233 (ESTL…FIAW).

Belongs to the UPF0283 family.

The protein localises to the cell inner membrane. This chain is UPF0283 membrane protein YcjF, found in Shigella boydii serotype 4 (strain Sb227).